Consider the following 433-residue polypeptide: Serine--tRNA ligase (433 aa).

235–237 lines the L-serine pocket; sequence TSE. 266 to 268 lines the ATP pocket; that stretch reads RSE. Glu289 contacts L-serine. 353–356 contributes to the ATP binding site; the sequence is EISS. Position 388 (Ser388) interacts with L-serine.

The protein belongs to the class-II aminoacyl-tRNA synthetase family. Type-1 seryl-tRNA synthetase subfamily. As to quaternary structure, homodimer. The tRNA molecule binds across the dimer.

It is found in the cytoplasm. The catalysed reaction is tRNA(Ser) + L-serine + ATP = L-seryl-tRNA(Ser) + AMP + diphosphate + H(+). The enzyme catalyses tRNA(Sec) + L-serine + ATP = L-seryl-tRNA(Sec) + AMP + diphosphate + H(+). It functions in the pathway aminoacyl-tRNA biosynthesis; selenocysteinyl-tRNA(Sec) biosynthesis; L-seryl-tRNA(Sec) from L-serine and tRNA(Sec): step 1/1. Its function is as follows. Catalyzes the attachment of serine to tRNA(Ser). Is also able to aminoacylate tRNA(Sec) with serine, to form the misacylated tRNA L-seryl-tRNA(Sec), which will be further converted into selenocysteinyl-tRNA(Sec). The chain is Serine--tRNA ligase from Burkholderia cenocepacia (strain ATCC BAA-245 / DSM 16553 / LMG 16656 / NCTC 13227 / J2315 / CF5610) (Burkholderia cepacia (strain J2315)).